Reading from the N-terminus, the 409-residue chain is Putative competence-damage inducible protein (409 aa).

The protein belongs to the CinA family.

This chain is Putative competence-damage inducible protein, found in Clostridium botulinum (strain 657 / Type Ba4).